Here is a 220-residue protein sequence, read N- to C-terminus: Elongation factor Ts, chloroplastic (220 aa).

The protein belongs to the EF-Ts family.

The protein localises to the plastid. It localises to the chloroplast. In terms of biological role, associates with the EF-Tu.GDP complex and induces the exchange of GDP to GTP. It remains bound to the aminoacyl-tRNA.EF-Tu.GTP complex up to the GTP hydrolysis stage on the ribosome. This chain is Elongation factor Ts, chloroplastic (tsf), found in Pyropia yezoensis (Susabi-nori).